Here is a 461-residue protein sequence, read N- to C-terminus: Cytochrome c biogenesis protein CcsB (461 aa).

3 helical membrane passes run 32-52 (LRLAIALLLIIALFSISGTVI), 91-111 (TWWFLSLLVLFGTSLTACTFT), and 178-198 (IGPIIVHIGIVTILLGSIWGA).

The protein belongs to the Ccs1/CcsB family. May interact with CcsA.

Its subcellular location is the cellular thylakoid membrane. Its function is as follows. Required during biogenesis of c-type cytochromes (cytochrome c6 and cytochrome f) at the step of heme attachment. The chain is Cytochrome c biogenesis protein CcsB from Nostoc sp. (strain PCC 7120 / SAG 25.82 / UTEX 2576).